We begin with the raw amino-acid sequence, 669 residues long: RNA-binding protein 14 (669 aa).

RRM domains lie at 1-73 (MKIF…MSRP) and 79-149 (WKIF…LSTK). Residues Lys-126, Lys-135, Lys-138, Lys-149, and Lys-153 each participate in a glycyl lysine isopeptide (Lys-Gly) (interchain with G-Cter in SUMO2) cross-link. 2 disordered regions span residues 148-175 (TKGQ…DTAF) and 193-232 (NSTG…PLTA). Position 161 is a phosphoserine (Ser-161). Lys-164 carries the N6-acetyllysine; alternate modification. Lys-164 participates in a covalent cross-link: Glycyl lysine isopeptide (Lys-Gly) (interchain with G-Cter in SUMO2); alternate. Thr-206 carries the post-translational modification Phosphothreonine. Phosphoserine occurs at positions 220, 242, 244, 256, 272, and 280. The disordered stretch occupies residues 284–303 (PYRGQLASPSSQSAAASSLG). Positions 287–303 (GQLASPSSQSAAASSLG) are enriched in low complexity. A TRBP-interacting domain; interaction with STIL region spans residues 307-354 (GAQPSASALSSYGGQPAAASSLNSYGAQGSSLASYGNQPSSYGAQAAS). A phosphoserine mark is found at Ser-520, Ser-523, Ser-527, and Ser-562. The interval 569–590 (ANSTPPPYERTRLSPPRASYDD) is disordered. Phosphothreonine is present on Thr-572. Ser-582 is subject to Phosphoserine. Lys-600 is covalently cross-linked (Glycyl lysine isopeptide (Lys-Gly) (interchain with G-Cter in SUMO2)). Ser-618, Ser-620, Ser-623, Ser-627, Ser-643, and Ser-649 each carry phosphoserine.

Interacts with NCOA6, CITED1 and XRCC5/KU86. Interacts with SS18. Interacts with STIL and interferes with its interaction with CPAP. Interacts with gamma-tubulin. Part of the HDP-RNP complex composed of at least HEXIM1, PRKDC, XRCC5, XRCC6, paraspeckle proteins (SFPQ, NONO, PSPC1, RBM14, and MATR3) and NEAT1 RNA.

Its subcellular location is the nucleus. The protein resides in the nucleolus. It is found in the cytoplasm. In terms of biological role, may function as a nuclear receptor coactivator, enhancing transcription through other coactivators such as NCOA6 and CITED1. Regulates centriole biogenesis by suppressing the formation of aberrant centriolar protein complexes in the cytoplasm and thus preserving mitotic spindle integrity. Prevents the formation of the STIL-CPAP complex (which can induce the formation of aberrant centriolar protein complexes) by interfering with the interaction of STIL with CPAP. Plays a role in the regulation of DNA virus-mediated innate immune response by assembling into the HDP-RNP complex, a complex that serves as a platform for IRF3 phosphorylation and subsequent innate immune response activation through the cGAS-STING pathway. The protein is RNA-binding protein 14 (RBM14) of Bos taurus (Bovine).